A 412-amino-acid polypeptide reads, in one-letter code: Autophagy-related protein 34 (412 aa).

Residues Asn246 to Leu348 form an AMS1-binding region.

In terms of assembly, interacts with AMS1, ATG8 and ATG11.

The protein resides in the preautophagosomal structure membrane. Functionally, cargo-receptor protein involved in the cytoplasm to vacuole transport (Cvt) and in autophagy. Recognizes cargo proteins, such as AMS1 and delivers them to the pre-autophagosomal structure for eventual engulfment by the autophagosome and targeting to the vacuole. The sequence is that of Autophagy-related protein 34 (ATG34) from Saccharomyces cerevisiae (strain ATCC 204508 / S288c) (Baker's yeast).